A 194-amino-acid chain; its full sequence is Peptidyl-tRNA hydrolase (194 aa).

Position 21 (Y21) interacts with tRNA. H26 serves as the catalytic Proton acceptor. Y72, N74, and N120 together coordinate tRNA.

It belongs to the PTH family. As to quaternary structure, monomer.

The protein resides in the cytoplasm. It carries out the reaction an N-acyl-L-alpha-aminoacyl-tRNA + H2O = an N-acyl-L-amino acid + a tRNA + H(+). In terms of biological role, hydrolyzes ribosome-free peptidyl-tRNAs (with 1 or more amino acids incorporated), which drop off the ribosome during protein synthesis, or as a result of ribosome stalling. Catalyzes the release of premature peptidyl moieties from peptidyl-tRNA molecules trapped in stalled 50S ribosomal subunits, and thus maintains levels of free tRNAs and 50S ribosomes. The polypeptide is Peptidyl-tRNA hydrolase (Halorhodospira halophila (strain DSM 244 / SL1) (Ectothiorhodospira halophila (strain DSM 244 / SL1))).